A 473-amino-acid chain; its full sequence is Tyrosine phenol-lyase (473 aa).

N6-(pyridoxal phosphate)lysine is present on Lys257.

It belongs to the beta-eliminating lyase family. In terms of assembly, homotetramer. It depends on pyridoxal 5'-phosphate as a cofactor.

The enzyme catalyses L-tyrosine + H2O = phenol + pyruvate + NH4(+). This chain is Tyrosine phenol-lyase, found in Intrasporangium calvum (strain ATCC 23552 / DSM 43043 / JCM 3097 / NBRC 12989 / NCIMB 10167 / NRRL B-3866 / 7 KIP).